The chain runs to 410 residues: Phospho-N-acetylmuramoyl-pentapeptide-transferase (410 aa).

A run of 10 helical transmembrane segments spans residues 23–43 (YITF…TIYG), 73–93 (TPTM…FLFA), 96–116 (HNIY…IGFV), 132–152 (GIFK…VLYF), 215–235 (WAWL…SNGA), 248–268 (TSAV…NIIF), 285–305 (VFIS…SFPA), 307–327 (VFMG…LAIA), 332–352 (ILIV…IIQV), and 387–407 (KIVT…IVTL).

This sequence belongs to the glycosyltransferase 4 family. MraY subfamily. It depends on Mg(2+) as a cofactor.

It is found in the cell inner membrane. The catalysed reaction is UDP-N-acetyl-alpha-D-muramoyl-L-alanyl-gamma-D-glutamyl-meso-2,6-diaminopimeloyl-D-alanyl-D-alanine + di-trans,octa-cis-undecaprenyl phosphate = di-trans,octa-cis-undecaprenyl diphospho-N-acetyl-alpha-D-muramoyl-L-alanyl-D-glutamyl-meso-2,6-diaminopimeloyl-D-alanyl-D-alanine + UMP. It participates in cell wall biogenesis; peptidoglycan biosynthesis. Catalyzes the initial step of the lipid cycle reactions in the biosynthesis of the cell wall peptidoglycan: transfers peptidoglycan precursor phospho-MurNAc-pentapeptide from UDP-MurNAc-pentapeptide onto the lipid carrier undecaprenyl phosphate, yielding undecaprenyl-pyrophosphoryl-MurNAc-pentapeptide, known as lipid I. The chain is Phospho-N-acetylmuramoyl-pentapeptide-transferase from Flavobacterium johnsoniae (strain ATCC 17061 / DSM 2064 / JCM 8514 / BCRC 14874 / CCUG 350202 / NBRC 14942 / NCIMB 11054 / UW101) (Cytophaga johnsonae).